The chain runs to 892 residues: Leucine--tRNA ligase (892 aa).

Residues P42 to H52 carry the 'HIGH' region motif. A 'KMSKS' region motif is present at residues T640–S644. Residue K643 participates in ATP binding.

Belongs to the class-I aminoacyl-tRNA synthetase family.

The protein localises to the cytoplasm. The enzyme catalyses tRNA(Leu) + L-leucine + ATP = L-leucyl-tRNA(Leu) + AMP + diphosphate. The protein is Leucine--tRNA ligase of Albidiferax ferrireducens (strain ATCC BAA-621 / DSM 15236 / T118) (Rhodoferax ferrireducens).